We begin with the raw amino-acid sequence, 317 residues long: UV DNA damage endonuclease (317 aa).

Belongs to the uve1/UvsE family.

In terms of biological role, component in a DNA repair pathway. Removal of UV LIGHT damaged nucleotides. Recognizes pyrimidine dimers and cleave a phosphodiester bond immediately 5' to the lesion. The chain is UV DNA damage endonuclease from Bacillus cereus (strain 03BB102).